The primary structure comprises 684 residues: UvrABC system protein B (684 aa).

The 159-residue stretch at 30–188 (EGVQRGDRWQ…QELVSLHYVR (159 aa)) folds into the Helicase ATP-binding domain. 43 to 50 (GVTGSGKT) contributes to the ATP binding site. A Beta-hairpin motif is present at residues 96-119 (YYDFYQPEAYLPALDKYIAKDLRI). Residues 435–601 (QIDDLLGEIR…SIIKSVEQVL (167 aa)) enclose the Helicase C-terminal domain. Residues 641 to 676 (YSMAESLRLEMQEAALKMEYEKAAYLRDEITKFEHR) enclose the UVR domain.

Belongs to the UvrB family. In terms of assembly, forms a heterotetramer with UvrA during the search for lesions. Interacts with UvrC in an incision complex.

The protein resides in the cytoplasm. The UvrABC repair system catalyzes the recognition and processing of DNA lesions. A damage recognition complex composed of 2 UvrA and 2 UvrB subunits scans DNA for abnormalities. Upon binding of the UvrA(2)B(2) complex to a putative damaged site, the DNA wraps around one UvrB monomer. DNA wrap is dependent on ATP binding by UvrB and probably causes local melting of the DNA helix, facilitating insertion of UvrB beta-hairpin between the DNA strands. Then UvrB probes one DNA strand for the presence of a lesion. If a lesion is found the UvrA subunits dissociate and the UvrB-DNA preincision complex is formed. This complex is subsequently bound by UvrC and the second UvrB is released. If no lesion is found, the DNA wraps around the other UvrB subunit that will check the other stand for damage. This chain is UvrABC system protein B, found in Chlorobium limicola (strain DSM 245 / NBRC 103803 / 6330).